A 388-amino-acid chain; its full sequence is Putative O-antigen polymerase (388 aa).

The next 9 membrane-spanning stretches (helical) occupy residues 23 to 43 (IFYPAVCVNIIFALVLLGYEI), 57 to 77 (LIFLLCNVLTFTLSCLLTESV), 97 to 117 (VHNVGLLVISFSMIYICMRLS), 143 to 163 (NFSAYMQPIILTTFALFIWSK), 180 to 200 (IVFIFAIILNTGKQIVFMVII), 215 to 235 (VYLITAVGVLFSLYMLFLRGL), 312 to 332 (ISAELSYLMMVIHGCISGVLW), 338 to 358 (YISVKIFYSYFIYTFSFIFYH), and 361 to 381 (FMTNISSWIQITLCIIVFSQF).

It is found in the cell inner membrane. In terms of biological role, may function in vitro as a polymerase that catalyzes the polymerization of the O-antigen repeat units on the periplasmic face of the inner membrane, leading to the formation of the lipid-linked O-antigen molecule. However, E.coli K12 strains do not normally produce the O-antigen in vivo due to mutations in the rfb gene cluster. K12 strains are phenotypically rough, their lipopolysaccharide having a complete core structure, but no O-antigen. The polypeptide is Putative O-antigen polymerase (Escherichia coli (strain K12)).